A 146-amino-acid polypeptide reads, in one-letter code: Leghemoglobin alpha (146 aa).

The Globin domain occupies 3 to 146; sequence AFTEKQEALV…LAAAIKKAYA (144 aa). Nitrated tyrosine is present on residues tyrosine 26 and tyrosine 31. Serine 46 is a heme b binding site. Serine 46 is modified (phosphoserine). Histidine 62 contributes to the O2 binding site. 2 residues coordinate heme b: histidine 93 and lysine 96. Tyrosine 134 carries the post-translational modification Nitrated tyrosine.

The protein belongs to the plant globin family. As to quaternary structure, monomer. Post-translationally, nitrated mainly at Tyr-31 and, to a lower extent, at Tyr-26 and Tyr-134, in effective nodules and particularly in hypoxic conditions; this mechanism may play a protective role in the symbiosis by buffering toxic peroxynitrite NO(2)(-). Nitration level decrease during nodule senescence. In terms of processing, phosphorylation at Ser-46 disrupts the molecular environment of its porphyrin ring oxygen binding pocket, thus leading to a reduced oxygen consumption and to the delivery of oxygen O(2) to symbiosomes. In terms of tissue distribution, root nodules.

It is found in the cytoplasm. It localises to the cytosol. The protein localises to the nucleus. In terms of biological role, leghemoglobin that reversibly binds oxygen O(2) through a pentacoordinated heme iron. In root nodules, facilitates the diffusion of oxygen to the bacteroids while preventing the bacterial nitrogenase from being inactivated by buffering dioxygen, nitric oxide and carbon monoxide, and promoting the formation of reactive oxygen species (ROS, e.g. H(2)O(2)). This role is essential for symbiotic nitrogen fixation (SNF). This is Leghemoglobin alpha from Phaseolus vulgaris (Kidney bean).